Consider the following 454-residue polypeptide: Putative F-box/LRR-repeat protein At3g58880 (454 aa).

Residues 2–48 (VDLVSSLPDDLLGHILSLLTTKEAALTSILSKRWRYLIAFVPYLEFD) enclose the F-box domain. LRR repeat units follow at residues 77–102 (LALH…DLLN), 144–168 (SGCR…TLDS), 169–194 (VSWS…NLAN), 214–240 (IKSV…NYTA), 270–301 (LVSV…YLSP), 303–327 (TLQV…VIES), and 328–353 (SMDI…VIKG).

The sequence is that of Putative F-box/LRR-repeat protein At3g58880 from Arabidopsis thaliana (Mouse-ear cress).